The sequence spans 352 residues: Putative conjugal transfer protein MT3759 (352 aa).

Residue 160 to 167 (GGTGAGKT) coordinates ATP.

Belongs to the GSP E family.

Its subcellular location is the cytoplasm. The chain is Putative conjugal transfer protein MT3759 from Mycobacterium tuberculosis (strain CDC 1551 / Oshkosh).